Reading from the N-terminus, the 80-residue chain is Conotoxin SmIVA (80 aa).

The signal sequence occupies residues 1 to 21 (MGMRMMFTVFLLVVLATTVVS). The propeptide occupies 22–38 (IPSDRASDGRNAAVNER). Pyrrolidone carboxylic acid is present on Gln39. O-linked (HexNAc...) serine glycosylation occurs at Ser45. A 4-hydroxyproline mark is found at Pro55, Pro60, Pro70, and Pro72. Ser75 is subject to Serine amide. The propeptide occupies 76–80 (GRRND).

It belongs to the conotoxin A superfamily. In terms of processing, contains 3 disulfide bonds. As to expression, expressed by the venom duct.

Its subcellular location is the secreted. Its function is as follows. Neurotoxin with probable activity on sodium channel. Induces intense repetitive firing of the frog neuromuscular junction, leading to a tetanic contracture in muscle fiber (spastic paralysis). In vivo, shows the same effect as the whole venom when injected on fish prey. In Conus stercusmuscarum (Fly-specked cone), this protein is Conotoxin SmIVA.